We begin with the raw amino-acid sequence, 151 residues long: Prefoldin subunit 5 (151 aa).

A coiled-coil region spans residues 15–35 (IDQLKALKEQADLEVNLLQDS).

This sequence belongs to the prefoldin subunit alpha family. In terms of assembly, heterohexamer of two PFD-alpha type and four PFD-beta type subunits forming prefoldin co-chaperone complex. Interacts with PFD6. Binds to the DELLA protein GAI.

The protein localises to the cytoplasm. It is found in the nucleus. Its function is as follows. Binds specifically to cytosolic chaperonin (c-CPN) and transfers target proteins to it. Binds to nascent polypeptide chain and promotes folding in an environment in which there are many competing pathways for nonnative proteins. Together with other chaperonins, contribute to the regulation of gene expression by modulating the spliceosome function on pre-mRNA splicing post-transcriptionally by acting as a co-chaperone of Hsp90 to control levels of LSM8. Required for the biogenesis of tubulins and for subsequent microtubules (MTs) organization and dynamicity. Necessary for tolerance to NaCl salt stress. Involved in the process leading to microtubules dissociation in response to gibberellic acid (GA) probably due to the DELLA proteins-mediated translocation of the prefoldin co-chaperone complex from the cytoplasm to the nucleus. Prevents cold acclimation (e.g. 7 days at 4 degrees Celsius) in a DELLA proteins-dependent manner by promoting nuclear proteasome-mediated HY5 degradation, thus modulating the expression of several genes and reducing anthocyanin biosynthesis, but seems not involved in constitutive freezing tolerance. Contributes to the GA-dependent regulation of PIN2 trafficking at the plasma membrane, thus influencing auxin flux. The chain is Prefoldin subunit 5 from Arabidopsis thaliana (Mouse-ear cress).